Reading from the N-terminus, the 1340-residue chain is Serine/threonine-protein phosphatase 7 long form homolog (1340 aa).

Mn(2+) is bound by residues Asp660 and His662. Catalysis depends on His722, which acts as the Proton donor. His773 serves as a coordination point for Mn(2+). Disordered regions lie at residues 788–814, 1012–1093, 1196–1218, and 1266–1340; these read QERNRKRKRTQKKQTDNTVLDTEDRSE, KSMD…SRTR, TDGAENLEPSTSKLNYSEPSEDI, and FTNL…DMDS. Positions 790 to 799 are enriched in basic residues; that stretch reads RNRKRKRTQK. Acidic residues predominate over residues 1018-1027; sequence EQMEVDEKDD. Residues 1049–1080 show a composition bias toward basic and acidic residues; sequence GDRDMVDFSDKTENGSKEADHSETAEISKDLS. Residues 1203–1213 show a composition bias toward polar residues; it reads EPSTSKLNYSE. 2 stretches are compositionally biased toward basic and acidic residues: residues 1266 to 1289 and 1318 to 1328; these read FTNLTKPSHDKGYGESADKPERVI and DSVDSKNKGSL.

It belongs to the PPP phosphatase family. PP-7 subfamily. Mn(2+) is required as a cofactor. Expressed in root tips, the shoot apical meristem (SAM), leaf vasculature, hydathodes and mature flowers.

Its subcellular location is the nucleus. The catalysed reaction is O-phospho-L-seryl-[protein] + H2O = L-seryl-[protein] + phosphate. It catalyses the reaction O-phospho-L-threonyl-[protein] + H2O = L-threonyl-[protein] + phosphate. Its function is as follows. Maybe required to maintain cell division activity in meristematic cells. This Arabidopsis thaliana (Mouse-ear cress) protein is Serine/threonine-protein phosphatase 7 long form homolog.